The sequence spans 248 residues: Sugar fermentation stimulation protein homolog (248 aa).

It belongs to the SfsA family.

This chain is Sugar fermentation stimulation protein homolog, found in Methylorubrum extorquens (strain CM4 / NCIMB 13688) (Methylobacterium extorquens).